The following is a 255-amino-acid chain: Geranylgeranylglyceryl phosphate synthase (255 aa).

Mg(2+) is bound by residues D26 and S55. Residues 174-180, 205-206, and 227-228 contribute to the sn-glycerol 1-phosphate site; these read YLEAGSG, GG, and GT.

This sequence belongs to the GGGP/HepGP synthase family. Group II subfamily. Requires Mg(2+) as cofactor.

It localises to the cytoplasm. It carries out the reaction sn-glycerol 1-phosphate + (2E,6E,10E)-geranylgeranyl diphosphate = sn-3-O-(geranylgeranyl)glycerol 1-phosphate + diphosphate. It functions in the pathway membrane lipid metabolism; glycerophospholipid metabolism. Prenyltransferase that catalyzes the transfer of the geranylgeranyl moiety of geranylgeranyl diphosphate (GGPP) to the C3 hydroxyl of sn-glycerol-1-phosphate (G1P). This reaction is the first ether-bond-formation step in the biosynthesis of archaeal membrane lipids. This is Geranylgeranylglyceryl phosphate synthase from Thermococcus sibiricus (strain DSM 12597 / MM 739).